A 390-amino-acid chain; its full sequence is Calcium-binding and spermatid-specific protein 1 (390 aa).

Disordered stretches follow at residues 1–23, 82–109, and 146–225; these read MAED…TPTE, ASLK…KESI, and TIDA…TIPD. Over residues 162-174 the composition is skewed to acidic residues; that stretch reads ETQEDSSANDEDT. Residues 184-193 are compositionally biased toward low complexity; sequence TDVSSSTSSD. 2 positions are modified to phosphoserine: Ser251 and Ser267. Position 280 is a phosphothreonine; by CK2 (Thr280). The residue at position 312 (Ser312) is a Phosphoserine. Over residues 330–344 the composition is skewed to basic and acidic residues; sequence EPHVDTKNSPEKDAA. The interval 330-390 is disordered; the sequence is EPHVDTKNSP…LKEEPDELMM (61 aa). Phosphoserine is present on residues Ser346, Ser356, Ser371, and Ser375. Residues 346–364 are compositionally biased toward polar residues; the sequence is SVTNVTEEFPSVTSVVEQS.

As to expression, expressed in seminiferous tubules of the testis in step 10 spermatids (stage X), subsequently increasing to reach maximal levels of step 18 elongated spermatids (stage VI) (at protein level). Strongly expressed in testis. Weakly expressed in olfactory epithelium. Expressed in spermatids of seminiferous tubules at steps 4-14 (stages IV to XIV of the seminiferous epithelium classification).

It is found in the cytoplasm. It localises to the mitochondrion inner membrane. The protein localises to the cell projection. Its subcellular location is the cilium. The protein resides in the flagellum. It is found in the cytoplasmic vesicle. It localises to the secretory vesicle. The protein localises to the acrosome. Calcium-binding protein. Essential for maintaining the structural integrity of the sperm flagella. This chain is Calcium-binding and spermatid-specific protein 1 (Cabs1), found in Rattus norvegicus (Rat).